The following is a 293-amino-acid chain: uncharacterized protein (293 aa).

Residue Asp119 is part of the active site.

Belongs to the pseudouridine synthase RluA family.

The enzyme catalyses a uridine in RNA = a pseudouridine in RNA. This is an uncharacterized protein from Helicobacter pylori (strain J99 / ATCC 700824) (Campylobacter pylori J99).